Reading from the N-terminus, the 487-residue chain is Polyamine oxidase 4 (487 aa).

Positions 53, 61, 242, and 429 each coordinate FAD. Positions 485–487 match the Microbody targeting signal motif; sequence CRT.

Belongs to the flavin monoamine oxidase family. Requires FAD as cofactor. Widely expressed.

Its subcellular location is the peroxisome. It catalyses the reaction spermine + O2 + H2O = 3-aminopropanal + spermidine + H2O2. The catalysed reaction is norspermine + O2 + H2O = norspermidine + 3-aminopropanal + H2O2. It carries out the reaction thermospermine + O2 + H2O = 3-aminopropanal + spermidine + H2O2. It participates in amine and polyamine degradation; spermine degradation. Its function is as follows. Flavoenzyme involved in polyamine back-conversion. Catalyzes the oxidation of the secondary amino group of polyamines, such as spermine. Substrate preference is spermine &gt; thermospermine &gt; norspermine. No activity detected when putrescine, spermidine or N(1)-acetylspermidine are used as substrates. Plays an important role in the regulation of polyamine intracellular concentration. The polypeptide is Polyamine oxidase 4 (Oryza sativa subsp. japonica (Rice)).